A 364-amino-acid polypeptide reads, in one-letter code: UDP-arabinopyranose mutase 1 (364 aa).

Positions 110–112 match the DXD motif motif; sequence DDD. R158 is a glycosylation site (N-linked (Glc...) arginine).

Belongs to the RGP family. Heteromers with UAM2 and UAM3. Mn(2+) serves as cofactor. The cofactor is Mg(2+). In terms of processing, reversibly glycosylated in vitro at Arg-158 by UDP-glucose. Reversibly glycosylated by UDP-xylose and UDP-galactose.

It is found in the golgi apparatus. It catalyses the reaction UDP-beta-L-arabinofuranose = UDP-beta-L-arabinopyranose. Functionally, UDP-L-arabinose mutase involved in the biosynthesis of cell wall non-cellulosic polysaccharides. Catalyzes the interconvertion of UDP-L-arabinopyranose (UDP-Arap) and UDP-L-arabinofuranose (UDP-Araf). Preferentially catalyzes the formation of UDP-Arap from UDP-Araf. At thermodynamic equilibrium in vitro the ratio of the pyranose form over the furanose form is 90:10. Is probably active as heteromer in vivo. This chain is UDP-arabinopyranose mutase 1, found in Oryza sativa subsp. japonica (Rice).